We begin with the raw amino-acid sequence, 376 residues long: MVGSRVYVGGLPYGVRERDLERFFKGYGRTRDILIKNGYGFVEFEDYRDADDAVYELNGKELLGERVVVEPARGTARGSNRDRYDDRYGGRRGGGGGRYNEKNKNSRSSSRYGPPLRTEYRLIVENLSSRVSWQDLKDYMRQAGEVTYADAHKQRRNEGVVEFASLSDMKTAIEKLDDTELNGRRIHLVEDRRGGRSGGGGGSGRGRSRSSSSRSRSRSRRRSRSRRSSHSRSKSRSRSKSRGGRSKSKSPVKSRSRSRSRSNKSRDVSKSKSKSHSRTRSRSPKRERDSRSRSRSVSKRESRSRSRSKSIHRDSRSRPPTVSFKSSFYKFTTMPFFCSDRSASAENKSRSRSRSRSASPKNGNASPDRNNESMDD.

An RRM 1 domain is found at 4–74; that stretch reads SRVYVGGLPY…ERVVVEPARG (71 aa). The tract at residues 73-114 is disordered; that stretch reads RGTARGSNRDRYDDRYGGRRGGGGGRYNEKNKNSRSSSRYGP. Over residues 79–89 the composition is skewed to basic and acidic residues; the sequence is SNRDRYDDRYG. Residues 120–193 enclose the RRM 2 domain; it reads YRLIVENLSS…RRIHLVEDRR (74 aa). Serine 165 carries the post-translational modification Phosphoserine. A compositionally biased stretch (basic and acidic residues) spans 185–194; the sequence is RIHLVEDRRG. Residues 185–376 are disordered; sequence RIHLVEDRRG…PDRNNESMDD (192 aa). The span at 196–205 shows a compositional bias: gly residues; it reads RSGGGGGSGR. Basic residues-rich tracts occupy residues 215–263 and 271–283; these read SRSR…SRSN and SKSK…RSRS. Residues 284–304 are compositionally biased toward basic and acidic residues; it reads PKRERDSRSRSRSVSKRESRS.

This sequence belongs to the splicing factor SR family. In terms of processing, extensively phosphorylated on serine residues in the RS domain.

It localises to the nucleus. Its function is as follows. Essential for development. May have a critical role in splicing or in controlling alternative splice site use of at least some pre-mRNA in vivo. Not required for all splicing. May play a general role in the condensation or decondensation of chromatin. This Drosophila melanogaster (Fruit fly) protein is Serine-arginine protein 55 (B52).